A 509-amino-acid polypeptide reads, in one-letter code: MDKLQYELQGYLEIDRYRKQRFLYPLLFREYIYALAHDHGLNSSIFYEPTENLGYDNDNKSSSLIVKRLITRLHQQNHLTISVNDSRFVGPNRSFYSQTIPEGFAGIMEIPFSVRLVSSLERERIAKYHNLRSIHSIFPFLEDKLSHLYYVSDILIPYPIHLEILLQTLRTRIRDAPSLHLLRCFLHEHHNWNSLITSTSNKSISIFSKENQRLFLFLYNSHVYECESVLVFLRKQSSHLRSISSLAFLERTHFYGKIKHLVVTPRNDSQRTLPLWFFKEPLMHYVRYQGKSIMASRCTNLLMKKWKYYLVNFWQCHFHLWSQPGRIHINELSNHSFYFLGYLLGVRLTPWVIRSQMLENSFMIDTAIKRFDTIVPIFPLIGSLVKAKFCNVSGYPISKSVWADSSDSDIIARFGWICRNLSHYHSGSSKKHSLCRIKYILRLSCARTLARKHKSTVRAICKRLGSKLLEEFLTEEHEIVSFIFRRTRLRSERIWYLDIIRIHGLVPHS.

Belongs to the intron maturase 2 family. MatK subfamily.

It is found in the plastid. The protein localises to the chloroplast. Its function is as follows. Usually encoded in the trnK tRNA gene intron. Probably assists in splicing its own and other chloroplast group II introns. The protein is Maturase K of Nymphaea odorata (White water lily).